The chain runs to 387 residues: MADTKKNDNYAIDMDKLDAESDRFRPPPQPQPRHSSSSHSQSISNSPVLPILSYCASSILMTVTNKYVLSGVQFNLNFFLLCVQSVVCIIAIQTCKSMGLINYRDFNSDEAKKWFPISLLLIGMIYTGTKALKFLSIPVYTIFKNLTIILIAYGEVLWFGGSVTGMALFSFGLMVLSSVIAAWADIKHALDTSGFSGAEATSKISTLNAGYIWMLINCLCTSTYILGMRKRIKLTNFKDFDTMFYNNLLSIPILMIGSFIVEDWSSENINKNFPIETRNSLIFAMIFSGLSSVFISYTSAWCVRVTSSTTYSMVGALNKLPIALSGLIFFGDPVTVPSVSAIVVGFISGIVYSLAKVKQNAKPRTGVLPTTNPVSASTQSMRDGLKS.

Over residues 1-25 the composition is skewed to basic and acidic residues; sequence MADTKKNDNYAIDMDKLDAESDRFR. Topologically, residues 1-42 are cytoplasmic; sequence MADTKKNDNYAIDMDKLDAESDRFRPPPQPQPRHSSSSHSQS. A disordered region spans residues 1–45; sequence MADTKKNDNYAIDMDKLDAESDRFRPPPQPQPRHSSSSHSQSISN. Residues 32–45 show a composition bias toward low complexity; sequence PRHSSSSHSQSISN. Residues 43-63 traverse the membrane as a helical segment; that stretch reads ISNSPVLPILSYCASSILMTV. The Lumenal portion of the chain corresponds to 64–71; sequence TNKYVLSG. Residues 72–92 form a helical membrane-spanning segment; sequence VQFNLNFFLLCVQSVVCIIAI. Topologically, residues 93–112 are cytoplasmic; the sequence is QTCKSMGLINYRDFNSDEAK. A helical transmembrane segment spans residues 113 to 129; that stretch reads KWFPISLLLIGMIYTGT. At 130–136 the chain is on the lumenal side; the sequence is KALKFLS. Residues 137-153 form a helical membrane-spanning segment; sequence IPVYTIFKNLTIILIAY. Topologically, residues 154-162 are cytoplasmic; that stretch reads GEVLWFGGS. Residues 163–184 form a helical membrane-spanning segment; that stretch reads VTGMALFSFGLMVLSSVIAAWA. Residues 185–206 are Lumenal-facing; sequence DIKHALDTSGFSGAEATSKIST. Residues 207 to 227 traverse the membrane as a helical segment; that stretch reads LNAGYIWMLINCLCTSTYILG. The Cytoplasmic portion of the chain corresponds to 228-241; the sequence is MRKRIKLTNFKDFD. A helical membrane pass occupies residues 242–262; the sequence is TMFYNNLLSIPILMIGSFIVE. At 263 to 280 the chain is on the lumenal side; it reads DWSSENINKNFPIETRNS. The chain crosses the membrane as a helical span at residues 281-301; the sequence is LIFAMIFSGLSSVFISYTSAW. Topologically, residues 302–309 are cytoplasmic; the sequence is CVRVTSST. The helical transmembrane segment at 310-329 threads the bilayer; it reads TYSMVGALNKLPIALSGLIF. Over 330–332 the chain is Lumenal; it reads FGD. The helical transmembrane segment at 333–355 threads the bilayer; it reads PVTVPSVSAIVVGFISGIVYSLA. At 356-387 the chain is on the cytoplasmic side; sequence KVKQNAKPRTGVLPTTNPVSASTQSMRDGLKS. Residues 366-387 form a disordered region; the sequence is GVLPTTNPVSASTQSMRDGLKS. A compositionally biased stretch (polar residues) spans 368–381; that stretch reads LPTTNPVSASTQSM.

It belongs to the TPT transporter family. SLC35D subfamily. As to quaternary structure, homooligomer.

It is found in the golgi apparatus membrane. It localises to the cytoplasmic vesicle membrane. The protein resides in the endoplasmic reticulum membrane. In terms of biological role, involved in the import of GDP-mannose from the cytoplasm into the Golgi lumen. This Coccidioides immitis (strain RS) (Valley fever fungus) protein is GDP-mannose transporter (VRG4).